The primary structure comprises 457 residues: uncharacterized protein (457 aa).

The region spanning 6 to 64 (PVHKGEVLDVTIMDLTYQGMGVAKVDNYPIFIENALPEEKITVKVTKTTKNFAFGDVEK) is the TRAM domain. S-adenosyl-L-methionine is bound by residues glutamine 287, tyrosine 316, glutamate 337, and aspartate 385. Cysteine 412 acts as the Nucleophile in catalysis.

Belongs to the class I-like SAM-binding methyltransferase superfamily. RNA M5U methyltransferase family.

This is an uncharacterized protein from Lactiplantibacillus plantarum (strain ATCC BAA-793 / NCIMB 8826 / WCFS1) (Lactobacillus plantarum).